Reading from the N-terminus, the 58-residue chain is Ferredoxin-2 (58 aa).

4Fe-4S ferredoxin-type domains are found at residues 2 to 27 (IEVN…MNEE) and 30 to 58 (KAVV…IVRS). Cys-8 contacts [3Fe-4S] cluster. The residue at position 11 (Cys-11) is a Cysteine methyl disulfide. Cys-14 serves as a coordination point for [3Fe-4S] cluster. A disulfide bond links Cys-18 and Cys-42. Cys-50 is a [3Fe-4S] cluster binding site.

Homodimer (ferredoxin I) or homotetramer (ferredoxin II). It depends on [3Fe-4S] cluster as a cofactor. [4Fe-4S] cluster is required as a cofactor.

Functionally, ferredoxins are iron-sulfur proteins that transfer electrons in a wide variety of metabolic reactions. This chain is Ferredoxin-2, found in Megalodesulfovibrio gigas (Desulfovibrio gigas).